The following is a 180-amino-acid chain: UPF0227 protein YpsIP31758_1593 (180 aa).

It belongs to the UPF0227 family.

The chain is UPF0227 protein YpsIP31758_1593 from Yersinia pseudotuberculosis serotype O:1b (strain IP 31758).